We begin with the raw amino-acid sequence, 270 residues long: Diaminopimelate epimerase (270 aa).

Residues Asn15, Gln49, and Asn66 each coordinate substrate. Cys75 (proton donor) is an active-site residue. Residues 76 to 77 (GN), Asn155, Asn187, and 204 to 205 (ER) contribute to the substrate site. The active-site Proton acceptor is the Cys213. 214 to 215 (GS) lines the substrate pocket.

This sequence belongs to the diaminopimelate epimerase family. As to quaternary structure, homodimer.

It is found in the cytoplasm. It catalyses the reaction (2S,6S)-2,6-diaminopimelate = meso-2,6-diaminopimelate. The protein operates within amino-acid biosynthesis; L-lysine biosynthesis via DAP pathway; DL-2,6-diaminopimelate from LL-2,6-diaminopimelate: step 1/1. Functionally, catalyzes the stereoinversion of LL-2,6-diaminopimelate (L,L-DAP) to meso-diaminopimelate (meso-DAP), a precursor of L-lysine and an essential component of the bacterial peptidoglycan. This is Diaminopimelate epimerase from Rickettsia africae (strain ESF-5).